The following is a 249-amino-acid chain: 2,3-bisphosphoglycerate-dependent phosphoglycerate mutase (249 aa).

Residues 9–16, 22–23, Arg-61, 88–91, Lys-99, 115–116, and 184–185 contribute to the substrate site; these read RHGQSQWN, TG, ERHY, RR, and GN. The active-site Tele-phosphohistidine intermediate is the His-10. Catalysis depends on Glu-88, which acts as the Proton donor/acceptor.

Belongs to the phosphoglycerate mutase family. BPG-dependent PGAM subfamily. Homodimer.

The catalysed reaction is (2R)-2-phosphoglycerate = (2R)-3-phosphoglycerate. It functions in the pathway carbohydrate degradation; glycolysis; pyruvate from D-glyceraldehyde 3-phosphate: step 3/5. Its function is as follows. Catalyzes the interconversion of 2-phosphoglycerate and 3-phosphoglycerate. The sequence is that of 2,3-bisphosphoglycerate-dependent phosphoglycerate mutase from Xanthomonas campestris pv. campestris (strain 8004).